Reading from the N-terminus, the 501-residue chain is Nuclear receptor-binding protein 2 (501 aa).

The segment at methionine 1 to proline 33 is disordered. Positions alanine 7 to glutamate 19 are enriched in basic and acidic residues. Residues aspartate 20–glutamate 30 are compositionally biased toward acidic residues. In terms of domain architecture, Protein kinase spans glutamine 38 to leucine 306. Phosphothreonine occurs at positions 409 and 411.

The protein belongs to the protein kinase superfamily. Ser/Thr protein kinase family.

The protein localises to the cytoplasm. Functionally, may regulate apoptosis of neural progenitor cells during their differentiation. The protein is Nuclear receptor-binding protein 2 of Homo sapiens (Human).